The sequence spans 98 residues: NADH-ubiquinone oxidoreductase chain 4L (98 aa).

The next 3 helical transmembrane spans lie at 1-21, 29-49, and 61-81; these read MTMV…GLLM, SLLC…ITIL, and IILL…LVMV.

This sequence belongs to the complex I subunit 4L family. Core subunit of respiratory chain NADH dehydrogenase (Complex I) which is composed of 45 different subunits.

It is found in the mitochondrion inner membrane. The catalysed reaction is a ubiquinone + NADH + 5 H(+)(in) = a ubiquinol + NAD(+) + 4 H(+)(out). Its function is as follows. Core subunit of the mitochondrial membrane respiratory chain NADH dehydrogenase (Complex I) which catalyzes electron transfer from NADH through the respiratory chain, using ubiquinone as an electron acceptor. Part of the enzyme membrane arm which is embedded in the lipid bilayer and involved in proton translocation. The protein is NADH-ubiquinone oxidoreductase chain 4L (MT-ND4L) of Ommatophoca rossii (Ross seal).